We begin with the raw amino-acid sequence, 422 residues long: Histidine--tRNA ligase (422 aa).

Belongs to the class-II aminoacyl-tRNA synthetase family. As to quaternary structure, homodimer.

Its subcellular location is the cytoplasm. It carries out the reaction tRNA(His) + L-histidine + ATP = L-histidyl-tRNA(His) + AMP + diphosphate + H(+). In Vibrio campbellii (strain ATCC BAA-1116), this protein is Histidine--tRNA ligase.